Reading from the N-terminus, the 201-residue chain is Putative lipoprotein LppC (201 aa).

The signal sequence occupies residues 1–23 (MTSTLHRTPLATAGLALVVALGG). A lipid anchor (N-palmitoyl cysteine) is attached at C24. A lipid anchor (S-diacylglycerol cysteine) is attached at C24. Prevents bacterial uptake by a human macrophage-like cell line regions lie at residues 77 to 96 (GANV…AELA), 97 to 116 (LVVD…IVTG), and 117 to 136 (IAPG…GHSV). Residues 122–141 (GSTADGQTPAGGHSVPNSGG) are disordered.

This sequence belongs to the UPF0098 family.

The protein localises to the cell membrane. The protein resides in the cell surface. Probably involved in bacterial recognition and uptake by its host (human). The polypeptide is Putative lipoprotein LppC (Mycobacterium tuberculosis (strain ATCC 25618 / H37Rv)).